We begin with the raw amino-acid sequence, 78 residues long: Small ribosomal subunit protein uS15 (78 aa).

Belongs to the universal ribosomal protein uS15 family. Part of the 30S ribosomal subunit. Forms a bridge to the 50S subunit in the 70S ribosome, contacting the 23S rRNA.

In terms of biological role, one of the primary rRNA binding proteins, it binds directly to 16S rRNA where it helps nucleate assembly of the platform of the 30S subunit by binding and bridging several RNA helices of the 16S rRNA. Functionally, forms an intersubunit bridge (bridge B4) with the 23S rRNA of the 50S subunit in the ribosome. In Karelsulcia muelleri (strain GWSS) (Sulcia muelleri), this protein is Small ribosomal subunit protein uS15.